The chain runs to 151 residues: UPF0208 membrane protein ESA_00924 (151 aa).

The next 2 helical transmembrane spans lie at 46–65 (FAIR…QIAL) and 69–91 (LGPA…WWLG).

The protein belongs to the UPF0208 family.

It localises to the cell inner membrane. The chain is UPF0208 membrane protein ESA_00924 from Cronobacter sakazakii (strain ATCC BAA-894) (Enterobacter sakazakii).